The primary structure comprises 2547 residues: MEPHVLGAGLYWLLLPCTLLAASLLRFNALSLVYLLFLLLLPWLPGPSRHSIPGHTGRLLRALLCLSLLFLVAHLAFQICLHTVPHLDQFLGQNGSLWVKVSQHIGVTRLDLKDIFNTTRLVAPDLGVLLASSLCLGLCGRLTRKAGQSRRTQELQDDDDDDDDDDEDIDAAPAVGLKGAPALATKRRLWLASRFRVTAHWLLMTSGRTLVIVLLALAGIAHPSAFSSIYLVVFLAICTWWSCHFPLSPLGFNTLCVMVSCFGAGHLICLYCYQTPFIQDMLPPGNIWARLFGLKNFVDLPNYSSPNALVLNTKHAWPIYVSPGILLLLYYTATSLLKLHKSCPSELRKETPREDEEHELELDHLEPEPQARDATQGEMPMTTEPDLDNCTVHVLTSQSPVRQRPVRPRLAELKEMSPLHGLGHLIMDQSYVCALIAMMVWSIMYHSWLTFVLLLWACLIWTVRSRHQLAMLCSPCILLYGLTLCCLRYVWAMELPELPTTLGPVSLHQLGLEHTRYPCLDLGAMLLYLLTFWLLLRQFVKEKLLKKQKVPAALLEVTVADTEPTQTQTLLRSLGELVTGIYVKYWIYVCAGMFIVVSFAGRLVVYKIVYMFLFLLCLTLFQVYYTLWRKLLRVFWWLVVAYTMLVLIAVYTFQFQDFPTYWRNLTGFTDEQLGDLGLEQFSVSELFSSILIPGFFLLACILQLHYFHRPFMQLTDLEHVPPPGTRHPRWAHRQDAVSEAPLLEHQEEEEVFREDGQSMDGPHQATQVPEGTASKWGLVADRLLDLAASFSAVLTRIQVFVRRLLELHVFKLVALYTVWVALKEVSVMNLLLVVLWAFALPYPRFRPMASCLSTVWTCIIIVCKMLYQLKIVNPHEYSSNCTEPFPNNTNLQPLEINQSLLYRGPVDPANWFGVRKGYPNLGYIQNHLQILLLLVFEAVVYRRQEHYRRQHQQAPLPAQAVCADGTRQRLDQDLLSCLKYFINFFFYKFGLEICFLMAVNVIGQRMNFMVILHGCWLVAILTRRRREAIARLWPNYCLFLTLFLLYQYLLCLGMPPALCIDYPWRWSKAIPMNSALIKWLYLPDFFRAPNSTNLISDFLLLLCASQQWQVFSAERTEEWQRMAGINTDHLEPLRGEPNPIPNFIHCRSYLDMLKVAVFRYLFWLVLVVVFVAGATRISIFGLGYLLACFYLLLFGTTLLQKDTRAQLVLWDCLILYNVTVIISKNMLSLLSCVFVEQMQSNFCWVIQLFSLVCTVKGYYDPKEMMTRDRDCLLPVEEAGIIWDSICFFFLLLQRRIFLSHYFLHVSADLKATALQASRGFALYNAANLKSINFHRQIEEKSLAQLKRQMKRIRAKQEKYRQSQASRGQLQSKDPQDPSQEPGPDSPGGSSPPRRQWWRPWLDHATVIHSGDYFLFESDSEEEEEALPEDPRPAAQSAFQMAYQAWVTNAQTVLRQRRERARQERAEQLASGGDLNPDVEPVDVPEDEMAGRSHMMQRVLSTMQFLWVLGQATVDGLTRWLRAFTKHHRTMSDVLCAERYLLTQELLRVGEVRRGVLDQLYVGEDEATLSGPVETRDGPSTASSGLGAEEPLSSMTDDTSSPLSTGYNTRSGSEEIVTDAGDLQAGTSLHGSQELLANARTRMRTASELLLDRRLHIPELEEAERFEAQQGRTLRLLRAGYQCVAAHSELLCYFIIILNHMVTASAASLVLPVLVFLWAMLTIPRPSKRFWMTAIVFTEVMVVTKYLFQFGFFPWNSYVVLRRYENKPYFPPRILGLEKTDSYIKYDLVQLMALFFHRSQLLCYGLWDHEEDRYPKDHCRSSVKDREAKEEPEAKLESQSETGTGHPKEPVLAGTPRDHIQGKGSIRSKDVIQDPPEDLKPRHTRHISIRFRRRKETPGPKGTAVMETEHEEGEGKETTERKRPRHTQEKSKFRERMKAAGRRLQSFCVSLAQSFYQPLQRFFHDILHTKYRAATDVYALMFLADIVDIIIIIFGFWAFGKHSAATDIASSLSDDQVPQAFLFMLLVQFGTMVIDRALYLRKTVLGKLAFQVVLVVAIHIWMFFILPAVTERMFSQNAVAQLWYFVKCIYFALSAYQIRCGYPTRILGNFLTKKYNHLNLFLFQGFRLVPFLVELRAVMDWVWTDTTLSLSNWMCVEDIYANIFIIKCSRETEKKYPQPKGQKKKKIVKYGMGGLIILFLIAIIWFPLLFMSLIRSVVGVVNQPIDVTVTLKLGGYEPLFTMSAQQPSIVPFTPQAYEELSQQFDPYPLAMQFISQYSPEDIVTAQIEGSSGALWRISPPSRAQMKQELYNGTADITLRFTWNFQRDLAKGGTVEYTNEKHTLELAPNSTARRQLAQLLEGRPDQSVVIPHLFPKYIRAPNGPEANPVKQLQPDEEEDYLGVRIQLRREQVGTGASGEQAGTKASDFLEWWVIELQDCKADCNLLPMVIFSDKVSPPSLGFLAGYGIVGLYVSIVLVVGKFVRGFFSEISHSIMFEELPCVDRILKLCQDIFLVRETRELELEEELYAKLIFLYRSPETMIKWTRERE.

At 1–12 (MEPHVLGAGLYW) the chain is on the cytoplasmic side. The chain crosses the membrane as a helical span at residues 13 to 25 (LLLPCTLLAASLL). Residues 26-28 (RFN) lie on the Extracellular side of the membrane. A helical transmembrane segment spans residues 29–44 (ALSLVYLLFLLLLPWL). Residues 45–58 (PGPSRHSIPGHTGR) lie on the Cytoplasmic side of the membrane. A helical transmembrane segment spans residues 59–81 (LLRALLCLSLLFLVAHLAFQICL). The Extracellular portion of the chain corresponds to 82–121 (HTVPHLDQFLGQNGSLWVKVSQHIGVTRLDLKDIFNTTRL). The N-linked (GlcNAc...) asparagine glycan is linked to asparagine 94. The helical transmembrane segment at 122-138 (VAPDLGVLLASSLCLGL) threads the bilayer. At 139 to 201 (CGRLTRKAGQ…ASRFRVTAHW (63 aa)) the chain is on the cytoplasmic side. A helical membrane pass occupies residues 202–221 (LLMTSGRTLVIVLLALAGIA). Over 222–223 (HP) the chain is Extracellular. Residues 224–243 (SAFSSIYLVVFLAICTWWSC) traverse the membrane as a helical segment. The Cytoplasmic portion of the chain corresponds to 244–254 (HFPLSPLGFNT). The helical transmembrane segment at 255 to 275 (LCVMVSCFGAGHLICLYCYQT) threads the bilayer. The Extracellular portion of the chain corresponds to 276 to 316 (PFIQDMLPPGNIWARLFGLKNFVDLPNYSSPNALVLNTKHA). Residues 317 to 337 (WPIYVSPGILLLLYYTATSLL) form a helical membrane-spanning segment. The Cytoplasmic segment spans residues 338–424 (KLHKSCPSEL…EMSPLHGLGH (87 aa)). The interval 347–387 (LRKETPREDEEHELELDHLEPEPQARDATQGEMPMTTEPDL) is disordered. Residues 361-371 (ELDHLEPEPQA) show a composition bias toward basic and acidic residues. A helical transmembrane segment spans residues 425–445 (LIMDQSYVCALIAMMVWSIMY). At 446–447 (HS) the chain is on the extracellular side. Residues 448 to 463 (WLTFVLLLWACLIWTV) traverse the membrane as a helical segment. At 464–468 (RSRHQ) the chain is on the cytoplasmic side. A helical transmembrane segment spans residues 469 to 491 (LAMLCSPCILLYGLTLCCLRYVW). The Extracellular segment spans residues 492-518 (AMELPELPTTLGPVSLHQLGLEHTRYP). The helical transmembrane segment at 519 to 536 (CLDLGAMLLYLLTFWLLL) threads the bilayer. The Cytoplasmic portion of the chain corresponds to 537 to 580 (RQFVKEKLLKKQKVPAALLEVTVADTEPTQTQTLLRSLGELVTG). The helical transmembrane segment at 581–601 (IYVKYWIYVCAGMFIVVSFAG) threads the bilayer. Arginine 602 is a topological domain (extracellular). The chain crosses the membrane as a helical span at residues 603 to 623 (LVVYKIVYMFLFLLCLTLFQV). The Cytoplasmic portion of the chain corresponds to 624–633 (YYTLWRKLLR). A helical transmembrane segment spans residues 634–655 (VFWWLVVAYTMLVLIAVYTFQF). Residues 656-685 (QDFPTYWRNLTGFTDEQLGDLGLEQFSVSE) lie on the Extracellular side of the membrane. A helical transmembrane segment spans residues 686–702 (LFSSILIPGFFLLACIL). Topologically, residues 703–811 (QLHYFHRPFM…RRLLELHVFK (109 aa)) are cytoplasmic. Serine 758 is modified (phosphoserine). A helical membrane pass occupies residues 812-823 (LVALYTVWVALK). Residues 824–826 (EVS) lie on the Extracellular side of the membrane. A helical membrane pass occupies residues 827–840 (VMNLLLVVLWAFAL). Residues 841 to 854 (PYPRFRPMASCLST) lie on the Cytoplasmic side of the membrane. A helical membrane pass occupies residues 855-869 (VWTCIIIVCKMLYQL). At 870 to 921 (KIVNPHEYSSNCTEPFPNNTNLQPLEINQSLLYRGPVDPANWFGVRKGYPNL) the chain is on the extracellular side. A helical transmembrane segment spans residues 922-949 (GYIQNHLQILLLLVFEAVVYRRQEHYRR). Topologically, residues 950-989 (QHQQAPLPAQAVCADGTRQRLDQDLLSCLKYFINFFFYKF) are cytoplasmic. A helical transmembrane segment spans residues 990–1005 (GLEICFLMAVNVIGQR). The Extracellular segment spans residues 1006–1007 (MN). Residues 1008–1023 (FMVILHGCWLVAILTR) traverse the membrane as a helical segment. Residues 1024-1036 (RRREAIARLWPNY) lie on the Cytoplasmic side of the membrane. Residues 1037–1052 (CLFLTLFLLYQYLLCL) traverse the membrane as a helical segment. Residues 1053–1091 (GMPPALCIDYPWRWSKAIPMNSALIKWLYLPDFFRAPNS) lie on the Extracellular side of the membrane. Residues 1092-1113 (TNLISDFLLLLCASQQWQVFSA) traverse the membrane as a helical segment. At 1114 to 1148 (ERTEEWQRMAGINTDHLEPLRGEPNPIPNFIHCRS) the chain is on the cytoplasmic side. The chain crosses the membrane as a helical span at residues 1149–1175 (YLDMLKVAVFRYLFWLVLVVVFVAGAT). Topologically, residues 1176-1180 (RISIF) are extracellular. A helical transmembrane segment spans residues 1181 to 1199 (GLGYLLACFYLLLFGTTLL). At 1200–1212 (QKDTRAQLVLWDC) the chain is on the cytoplasmic side. The chain crosses the membrane as a helical span at residues 1213 to 1231 (LILYNVTVIISKNMLSLLS). Over 1232–1280 (CVFVEQMQSNFCWVIQLFSLVCTVKGYYDPKEMMTRDRDCLLPVEEAGI) the chain is Extracellular. The helical transmembrane segment at 1281 to 1297 (IWDSICFFFLLLQRRIF) threads the bilayer. The Cytoplasmic segment spans residues 1298–1656 (LSHYFLHVSA…ELLLDRRLHI (359 aa)). Residues 1334-1365 (HRQIEEKSLAQLKRQMKRIRAKQEKYRQSQAS) adopt a coiled-coil conformation. 3 disordered regions span residues 1354–1396 (AKQE…RRQW), 1456–1480 (RRER…DVEP), and 1567–1610 (TLSG…NTRS). Polar residues predominate over residues 1361–1372 (QSQASRGQLQSK). Residues 1376-1392 (DPSQEPGPDSPGGSSPP) show a composition bias toward low complexity. 2 positions are modified to phosphoserine: serine 1385 and serine 1390. Positions 1592-1610 (SSMTDDTSSPLSTGYNTRS) are enriched in polar residues. A phosphoserine mark is found at serine 1627, serine 1631, and serine 1646. A helical transmembrane segment spans residues 1657–1700 (PELEEAERFEAQQGRTLRLLRAGYQCVAAHSELLCYFIIILNHM). Residues 1701–1704 (VTAS) are Extracellular-facing. The chain crosses the membrane as a helical span at residues 1705–1720 (AASLVLPVLVFLWAML). Topologically, residues 1721–1728 (TIPRPSKR) are cytoplasmic. The helical transmembrane segment at 1729–1747 (FWMTAIVFTEVMVVTKYLF) threads the bilayer. Residues 1748–1779 (QFGFFPWNSYVVLRRYENKPYFPPRILGLEKT) lie on the Extracellular side of the membrane. Residues 1780 to 1801 (DSYIKYDLVQLMALFFHRSQLL) traverse the membrane as a helical segment. The Cytoplasmic segment spans residues 1802-1976 (CYGLWDHEED…HTKYRAATDV (175 aa)). Composition is skewed to basic and acidic residues over residues 1816 to 1837 (DHCR…KLES) and 1855 to 1880 (PRDH…DLKP). Residues 1816-1931 (DHCRSSVKDR…RPRHTQEKSK (116 aa)) form a disordered region. Basic residues predominate over residues 1881–1894 (RHTRHISIRFRRRK). Basic and acidic residues predominate over residues 1912–1931 (GEGKETTERKRPRHTQEKSK). A helical transmembrane segment spans residues 1977-1996 (YALMFLADIVDIIIIIFGFW). Over 1997–2016 (AFGKHSAATDIASSLSDDQV) the chain is Extracellular. Residues 2017–2033 (PQAFLFMLLVQFGTMVI) traverse the membrane as a helical segment. Over 2034–2047 (DRALYLRKTVLGKL) the chain is Cytoplasmic. The chain crosses the membrane as a helical span at residues 2048 to 2068 (AFQVVLVVAIHIWMFFILPAV). The Extracellular segment spans residues 2069 to 2076 (TERMFSQN). Residues 2077–2092 (AVAQLWYFVKCIYFAL) traverse the membrane as a helical segment. Residues 2093–2192 (SAYQIRCGYP…KKKIVKYGMG (100 aa)) are Cytoplasmic-facing. A helical transmembrane segment spans residues 2193–2213 (GLIILFLIAIIWFPLLFMSLI). Topologically, residues 2214–2457 (RSVVGVVNQP…IFSDKVSPPS (244 aa)) are extracellular. A disulfide bridge links cysteine 2437 with cysteine 2441. A helical transmembrane segment spans residues 2458–2478 (LGFLAGYGIVGLYVSIVLVVG). At 2479 to 2547 (KFVRGFFSEI…TMIKWTRERE (69 aa)) the chain is on the cytoplasmic side.

This sequence belongs to the PIEZO (TC 1.A.75) family. Homotrimer; the homotrimer forms a propeller-shaped Piezo channel with a cation-ion conducting pore. Heterotrimeric interaction may occur between PIEZO1 and PIEZO2. Interacts with PKD2. Interacts with STOMl3. Interacts with TMC1, TMC2, PCDG15 and CIB2; the interaction may be part of the MET complex. Interacts with MDFIC (via C-terminus); the interaction prolongs Piezo channel inactivation. Interacts with MDFI (via C-terminus); the interaction prolongs Piezo channel inactivation. Expressed in bladder, colon, kidney and skin. Also expressed in bone marrow, liver, lung, spleen and erythrocytes (at protein level). Expressed in myoblasts (at protein level). Expressed in red blood cells. Expressed in cochlear inner and outer hair cells (IHCs and OHCs) and vestibular organ HCs.

It is found in the endoplasmic reticulum membrane. Its subcellular location is the endoplasmic reticulum-Golgi intermediate compartment membrane. The protein resides in the cell membrane. It localises to the cell projection. The protein localises to the lamellipodium membrane. The catalysed reaction is K(+)(in) = K(+)(out). The enzyme catalyses Na(+)(in) = Na(+)(out). It catalyses the reaction Ca(2+)(in) = Ca(2+)(out). It carries out the reaction Mg(2+)(in) = Mg(2+)(out). Regulated by auxillary subunits MDFIC and MDFI. Down-regulated by phosphatidylserines exposed on the cell surface. Divalent ions decrease the single-channel permeability of K(+). In terms of biological role, pore-forming subunit of the mechanosensitive non-specific cation Piezo channel required for rapidly adapting mechanically activated (MA) currents and has a key role in sensing touch and tactile pain. Piezo channels are homotrimeric three-blade propeller-shaped structures that utilize a cap-motion and plug-and-latch mechanism to gate their ion-conducting pathways. Generates currents characterized by a linear current-voltage relationship that are sensitive to ruthenium red and gadolinium. Conductance to monovalent alkali ions is highest for K(+), intermediate for Na(+) and lowest for Li(+). Divalent ions except for Mn(2+) permeate the channel but more slowly than the monovalent ions and they also reduce K(+) currents. Plays a key role in epithelial cell adhesion by maintaining integrin activation through R-Ras recruitment to the ER, most probably in its activated state, and subsequent stimulation of calpain signaling. In inner ear hair cells, PIEZO1/2 subunits may constitute part of the mechanotransducer (MET) non-selective cation channel complex where they may act as pore-forming ion-conducting component in the complex. In the kidney, may contribute to the detection of intraluminal pressure changes and to urine flow sensing. Acts as a shear-stress sensor that promotes endothelial cell organization and alignment in the direction of blood flow through calpain activation. Plays a key role in blood vessel formation and vascular structure in both development and adult physiology. Acts as a sensor of phosphatidylserine (PS) flipping at the plasma membrane and governs morphogenesis of muscle cells. In myoblasts, flippase-mediated PS enrichment at the inner leaflet of plasma membrane triggers channel activation and Ca(2+) influx followed by Rho GTPases signal transduction, leading to assembly of cortical actomyosin fibers and myotube formation. This Mus musculus (Mouse) protein is Piezo-type mechanosensitive ion channel component 1.